Reading from the N-terminus, the 599-residue chain is Elongation factor 4 (599 aa).

Residues 2–184 (KNIRNFSIIA…RLVRDIPPPQ (183 aa)) form the tr-type G domain. GTP-binding positions include 14–19 (DHGKST) and 131–134 (NKID).

It belongs to the TRAFAC class translation factor GTPase superfamily. Classic translation factor GTPase family. LepA subfamily.

It is found in the cell inner membrane. The enzyme catalyses GTP + H2O = GDP + phosphate + H(+). Its function is as follows. Required for accurate and efficient protein synthesis under certain stress conditions. May act as a fidelity factor of the translation reaction, by catalyzing a one-codon backward translocation of tRNAs on improperly translocated ribosomes. Back-translocation proceeds from a post-translocation (POST) complex to a pre-translocation (PRE) complex, thus giving elongation factor G a second chance to translocate the tRNAs correctly. Binds to ribosomes in a GTP-dependent manner. The sequence is that of Elongation factor 4 from Salmonella paratyphi A (strain ATCC 9150 / SARB42).